The chain runs to 1158 residues: Putative HERC2-like protein 3 (1158 aa).

The disordered stretch occupies residues 281–302; it reads PRKKRVPKKPESTDDEEKIGNE. Residues 293 to 302 show a composition bias toward acidic residues; the sequence is TDDEEKIGNE. The MIB/HERC2 domain occupies 587-660; sequence SGPELAAMMK…NYDLKLAELP (74 aa). Positions 662–684 are disordered; it reads PAQPSAEDSDTEDDSEAEQTERN. Positions 668-679 are enriched in acidic residues; it reads EDSDTEDDSEAE.

The chain is Putative HERC2-like protein 3 (HERC2P3) from Homo sapiens (Human).